A 465-amino-acid chain; its full sequence is ATP synthase subunit beta (465 aa).

An ATP-binding site is contributed by 149 to 156 (GGAGVGKT).

It belongs to the ATPase alpha/beta chains family. F-type ATPases have 2 components, CF(1) - the catalytic core - and CF(0) - the membrane proton channel. CF(1) has five subunits: alpha(3), beta(3), gamma(1), delta(1), epsilon(1). CF(0) has three main subunits: a(1), b(2) and c(9-12). The alpha and beta chains form an alternating ring which encloses part of the gamma chain. CF(1) is attached to CF(0) by a central stalk formed by the gamma and epsilon chains, while a peripheral stalk is formed by the delta and b chains.

The protein resides in the cell inner membrane. It catalyses the reaction ATP + H2O + 4 H(+)(in) = ADP + phosphate + 5 H(+)(out). Functionally, produces ATP from ADP in the presence of a proton gradient across the membrane. The catalytic sites are hosted primarily by the beta subunits. This is ATP synthase subunit beta from Dictyoglomus thermophilum (strain ATCC 35947 / DSM 3960 / H-6-12).